We begin with the raw amino-acid sequence, 524 residues long: NAD(P)H-quinone oxidoreductase chain 4, chloroplastic (524 aa).

The next 14 helical transmembrane spans lie at 4–24 (YPWLTIITLFPISAGLLIPLI), 31–51 (LIRWYALGICLIDFLLMTYVF), 87–107 (IALVLLTGFITTLATLAAWPV), 113–133 (LFYFLMLAMYSGQLGLFLAQD), 134–154 (LLLFFFMWELELIPVYLLLSM), 167–187 (FILYTAGGSIFLLAAILTISL), 211–231 (ILVYLGFLIAYAVKLPVFPFH), 242–262 (HYSTCMLLAGILLKMGGYGFI), 275–295 (IFAPWLVALGAGQIVYAALVS), 308–328 (SSVSHMGFVLIGAGSFSDLGL), 330–350 (GAILQMISHGLIGAGLFFLAG), 386–406 (LALPGMSGFVAELMIFLGIVA), 417–437 (IITCVEGIGIILTPIYLLSMV), and 465–485 (VFIILSLLVPMLGIGFYPDLT).

It belongs to the complex I subunit 4 family.

The protein resides in the plastid. Its subcellular location is the chloroplast thylakoid membrane. It catalyses the reaction a plastoquinone + NADH + (n+1) H(+)(in) = a plastoquinol + NAD(+) + n H(+)(out). It carries out the reaction a plastoquinone + NADPH + (n+1) H(+)(in) = a plastoquinol + NADP(+) + n H(+)(out). The polypeptide is NAD(P)H-quinone oxidoreductase chain 4, chloroplastic (Staurastrum punctulatum (Green alga)).